A 122-amino-acid chain; its full sequence is MIQQESRLKVADNTGAKEILCIRVLGGSGRRYAGIGDVIVATVKDAIPGGNVKRGDVVKAVIVRTVKERRRADGSYIRFDENAAVIIKNDNDPRGTRIFGPVGRELREKKFMKIVSLAPEVL.

Belongs to the universal ribosomal protein uL14 family. Part of the 50S ribosomal subunit. Forms a cluster with proteins L3 and L19. In the 70S ribosome, L14 and L19 interact and together make contacts with the 16S rRNA in bridges B5 and B8.

Binds to 23S rRNA. Forms part of two intersubunit bridges in the 70S ribosome. This chain is Large ribosomal subunit protein uL14, found in Mycolicibacterium gilvum (strain PYR-GCK) (Mycobacterium gilvum (strain PYR-GCK)).